Here is a 102-residue protein sequence, read N- to C-terminus: Large ribosomal subunit protein bL21 (102 aa).

Residues 79–91 (RKDSKRKKGHRQP) are compositionally biased toward basic residues. Residues 79 to 102 (RKDSKRKKGHRQPYTKLTIDKINA) form a disordered region.

The protein belongs to the bacterial ribosomal protein bL21 family. As to quaternary structure, part of the 50S ribosomal subunit. Contacts protein L20.

Its function is as follows. This protein binds to 23S rRNA in the presence of protein L20. In Staphylococcus epidermidis (strain ATCC 35984 / DSM 28319 / BCRC 17069 / CCUG 31568 / BM 3577 / RP62A), this protein is Large ribosomal subunit protein bL21.